A 171-amino-acid chain; its full sequence is uncharacterized protein (171 aa).

The protein to M.jannaschii MJ0417.

This is an uncharacterized protein from Methanocaldococcus jannaschii (strain ATCC 43067 / DSM 2661 / JAL-1 / JCM 10045 / NBRC 100440) (Methanococcus jannaschii).